A 185-amino-acid chain; its full sequence is Ribosome-recycling factor (185 aa).

Residues 143 to 163 (RKDGEAGEDEVARAEKDLDKS) are disordered.

It belongs to the RRF family.

It localises to the cytoplasm. Its function is as follows. Responsible for the release of ribosomes from messenger RNA at the termination of protein biosynthesis. May increase the efficiency of translation by recycling ribosomes from one round of translation to another. This chain is Ribosome-recycling factor, found in Mycobacterium ulcerans (strain Agy99).